Here is a 1078-residue protein sequence, read N- to C-terminus: Isoleucine--tRNA ligase (1078 aa).

Residues 52–62 (PTANGKPALHH) carry the 'HIGH' region motif. The 'KMSKS' region motif lies at 637–641 (KMSKS). K640 contributes to the ATP binding site.

This sequence belongs to the class-I aminoacyl-tRNA synthetase family. IleS type 2 subfamily. Monomer. Zn(2+) is required as a cofactor.

It is found in the cytoplasm. The enzyme catalyses tRNA(Ile) + L-isoleucine + ATP = L-isoleucyl-tRNA(Ile) + AMP + diphosphate. Functionally, catalyzes the attachment of isoleucine to tRNA(Ile). As IleRS can inadvertently accommodate and process structurally similar amino acids such as valine, to avoid such errors it has two additional distinct tRNA(Ile)-dependent editing activities. One activity is designated as 'pretransfer' editing and involves the hydrolysis of activated Val-AMP. The other activity is designated 'posttransfer' editing and involves deacylation of mischarged Val-tRNA(Ile). This Deinococcus radiodurans (strain ATCC 13939 / DSM 20539 / JCM 16871 / CCUG 27074 / LMG 4051 / NBRC 15346 / NCIMB 9279 / VKM B-1422 / R1) protein is Isoleucine--tRNA ligase.